The sequence spans 656 residues: NADH-ubiquinone oxidoreductase chain 5 (656 aa).

17 helical membrane passes run 4–21, 28–50, 81–103, 112–129, 133–155, 176–198, 208–230, 243–262, 272–294, 301–319, 329–351, 364–386, 409–431, 452–471, 514–536, 603–625, and 629–651; these read TLIILPLLGSIVSGFFGR, AHLITCVSVITTTFLAILAFFEV, LTVSMFITVLIVSSLVHIYSISY, RFFSYLSLFTFMMIILVT, YLIMFVGWEGVGVCSYLLVNFWF, TLLTVGMFAILWSFGNIDYSTVF, IITIIGICLLIGATAKSSQVGLH, VSALIHAATMVTAGVYLLMR, TVLVLCLWLGAITTVFSSLIGLF, VIAYSTMSQLGMMVIAVGL, LVNHAFYKALLFLGAGSVIHAVA, EFLPLTYSVMLIASLSLVAVPFM, IVYFVATIGAMFTTLYSAKVLYL, LFMTIPLIILAIFSIFFGYL, FVFTVSLSLLSVLLSEFLPKLLI, SLGNLSTGIVTTYALYILIGLIF, and LLYFSYNDNNLLILIIFTLFALL.

The protein belongs to the complex I subunit 5 family.

Its subcellular location is the mitochondrion inner membrane. It catalyses the reaction a ubiquinone + NADH + 5 H(+)(in) = a ubiquinol + NAD(+) + 4 H(+)(out). Its function is as follows. Core subunit of the mitochondrial membrane respiratory chain NADH dehydrogenase (Complex I) that is believed to belong to the minimal assembly required for catalysis. Complex I functions in the transfer of electrons from NADH to the respiratory chain. The immediate electron acceptor for the enzyme is believed to be ubiquinone. This is NADH-ubiquinone oxidoreductase chain 5 (nad5) from Aspergillus niger.